We begin with the raw amino-acid sequence, 335 residues long: MYPLARRILFALDAEKAHHFTLDALNTVYKLGLIPVTDNRTKPIKLMGMDLPNPVGLAAGLDKNGEYIDALGALGFGFLEIGTVTRNPQPGNPQPRLFRVPEHQGIINRMGFNNHGIDAMIRNIEKSKYQGVLGINIGKNAVTPIQNAADDYLICLEKAYAHASYITVNISSPNTKNLRALQGGGELGALLEALKNKQAQLAAAHGKYIPLAVKIAPDLDEAQIEDIARVVKSVEMDGIIATNTTIDKSSLGSHPLAGEQGGLSGFPVREKSNRVLKKLAEHIDGALPIIGVGGIMEGGDAAEKIRLGTTAVQVYSGLIYKGPALVKECLKALAR.

FMN contacts are provided by residues 59 to 63 and T83; that span reads AGLDK. K63 is a substrate binding site. Substrate is bound at residue 108–112; that stretch reads NRMGF. Residues N136 and N169 each coordinate FMN. N169 lines the substrate pocket. The active-site Nucleophile is the S172. N174 contributes to the substrate binding site. FMN is bound by residues K214 and T242. 243-244 is a binding site for substrate; it reads NT. Residues G265, G294, and 315 to 316 each bind FMN; that span reads YS.

This sequence belongs to the dihydroorotate dehydrogenase family. Type 2 subfamily. Monomer. Requires FMN as cofactor.

It is found in the cell membrane. The enzyme catalyses (S)-dihydroorotate + a quinone = orotate + a quinol. Its pathway is pyrimidine metabolism; UMP biosynthesis via de novo pathway; orotate from (S)-dihydroorotate (quinone route): step 1/1. In terms of biological role, catalyzes the conversion of dihydroorotate to orotate with quinone as electron acceptor. The protein is Dihydroorotate dehydrogenase (quinone) of Neisseria gonorrhoeae (strain ATCC 700825 / FA 1090).